A 396-amino-acid chain; its full sequence is Tryptophan synthase beta chain (396 aa).

At Lys88 the chain carries N6-(pyridoxal phosphate)lysine.

It belongs to the TrpB family. As to quaternary structure, tetramer of two alpha and two beta chains. Pyridoxal 5'-phosphate serves as cofactor.

It catalyses the reaction (1S,2R)-1-C-(indol-3-yl)glycerol 3-phosphate + L-serine = D-glyceraldehyde 3-phosphate + L-tryptophan + H2O. It participates in amino-acid biosynthesis; L-tryptophan biosynthesis; L-tryptophan from chorismate: step 5/5. Functionally, the beta subunit is responsible for the synthesis of L-tryptophan from indole and L-serine. The polypeptide is Tryptophan synthase beta chain (Leptospira biflexa serovar Patoc (strain Patoc 1 / Ames)).